Consider the following 318-residue polypeptide: MKHAENEYLNLCRHVMEHGTKKEDRTGTGTVSVFGYQMRFDLSKGFPLLTTKRVPFRLVASELLWFMKGDTNIRYLLQHNNNIWNEWAFKSWVESDEYTGPDMIDFGLRSQQDEEFKVQYDEQMELFKKNVLEDDEFSNKYGYLGDVYGKQWRAWKTTAGETLDQLKDVIEMIKKTPDSRRLIVSAWNPEDVPSMALPPCHTLFQFYVADGKLSCQLYQRSGDIFLGIPFNIASYSLLTHLIAHECGLEVGEFVHTIGDAHIYTNHFEQVEKQLAREPRPFPKLTLNPDVKSVFDFEMEDLTIEGYDPHPAIKAPVAV.

DUMP contacts are provided by residues R25 and 180–181; that span reads RR. C200 (nucleophile) is an active-site residue. DUMP contacts are provided by residues 220-223, N231, and 261-263; these read RSGD and HIY. (6R)-5,10-methylene-5,6,7,8-tetrahydrofolate is bound at residue D223. A317 lines the (6R)-5,10-methylene-5,6,7,8-tetrahydrofolate pocket.

It belongs to the thymidylate synthase family. Bacterial-type ThyA subfamily. Homodimer.

It localises to the cytoplasm. The enzyme catalyses dUMP + (6R)-5,10-methylene-5,6,7,8-tetrahydrofolate = 7,8-dihydrofolate + dTMP. It functions in the pathway pyrimidine metabolism; dTTP biosynthesis. Functionally, catalyzes the reductive methylation of 2'-deoxyuridine-5'-monophosphate (dUMP) to 2'-deoxythymidine-5'-monophosphate (dTMP) while utilizing 5,10-methylenetetrahydrofolate (mTHF) as the methyl donor and reductant in the reaction, yielding dihydrofolate (DHF) as a by-product. This enzymatic reaction provides an intracellular de novo source of dTMP, an essential precursor for DNA biosynthesis. In Bacillus thuringiensis subsp. konkukian (strain 97-27), this protein is Thymidylate synthase.